We begin with the raw amino-acid sequence, 523 residues long: 2-isopropylmalate synthase (523 aa).

The Pyruvate carboxyltransferase domain maps to 5–267 (VIIFDTTLRD…ETGINAKEIH (263 aa)). Mn(2+) is bound by residues D14, H202, H204, and N238. Positions 392-523 (ELQQLVVHSD…QQNKQEFGSV (132 aa)) are regulatory domain.

It belongs to the alpha-IPM synthase/homocitrate synthase family. LeuA type 1 subfamily. In terms of assembly, homodimer. Mn(2+) serves as cofactor.

The protein resides in the cytoplasm. It catalyses the reaction 3-methyl-2-oxobutanoate + acetyl-CoA + H2O = (2S)-2-isopropylmalate + CoA + H(+). The protein operates within amino-acid biosynthesis; L-leucine biosynthesis; L-leucine from 3-methyl-2-oxobutanoate: step 1/4. Catalyzes the condensation of the acetyl group of acetyl-CoA with 3-methyl-2-oxobutanoate (2-ketoisovalerate) to form 3-carboxy-3-hydroxy-4-methylpentanoate (2-isopropylmalate). This is 2-isopropylmalate synthase from Shewanella halifaxensis (strain HAW-EB4).